We begin with the raw amino-acid sequence, 263 residues long: Pyrrolysine synthase (263 aa).

L8, V57, I64, and A107 together coordinate L-pyrrolysine. Residues K155, V156, D175, C210, P228, I230, and E249 each coordinate NAD(+).

Belongs to the PylD family.

It catalyses the reaction (3R)-3-methyl-D-ornithyl-N(6)-L-lysine + NAD(+) = L-pyrrolysine + NH4(+) + NADH + 2 H(+). The protein operates within amino-acid biosynthesis; L-pyrrolysine biosynthesis. Catalyzes the ultimate step of the pyrrolysine biosynthesis pathway by converting the isopeptide (3R)-3-methyl-D-ornithyl-N(6)-L-lysine to the 22nd proteinogenic amino acid. Is able to use surrogate substrates such as (3R)-D-ornithyl-N(6)-L-lysine in vitro. This chain is Pyrrolysine synthase, found in Methanosarcina barkeri (strain Fusaro / DSM 804).